The chain runs to 96 residues: Large ribosomal subunit protein bL21 (96 aa).

The protein belongs to the bacterial ribosomal protein bL21 family. Part of the 50S ribosomal subunit. Contacts protein L20.

This protein binds to 23S rRNA in the presence of protein L20. This chain is Large ribosomal subunit protein bL21, found in Sulfurihydrogenibium sp. (strain YO3AOP1).